Reading from the N-terminus, the 185-residue chain is ATP synthase subunit delta (185 aa).

The protein belongs to the ATPase delta chain family. As to quaternary structure, F-type ATPases have 2 components, F(1) - the catalytic core - and F(0) - the membrane proton channel. F(1) has five subunits: alpha(3), beta(3), gamma(1), delta(1), epsilon(1). CF(0) has four main subunits: a(1), b(1), b'(1) and c(10-14). The alpha and beta chains form an alternating ring which encloses part of the gamma chain. F(1) is attached to F(0) by a central stalk formed by the gamma and epsilon chains, while a peripheral stalk is formed by the delta, b and b' chains.

It localises to the cellular thylakoid membrane. F(1)F(0) ATP synthase produces ATP from ADP in the presence of a proton or sodium gradient. F-type ATPases consist of two structural domains, F(1) containing the extramembraneous catalytic core and F(0) containing the membrane proton channel, linked together by a central stalk and a peripheral stalk. During catalysis, ATP synthesis in the catalytic domain of F(1) is coupled via a rotary mechanism of the central stalk subunits to proton translocation. Functionally, this protein is part of the stalk that links CF(0) to CF(1). It either transmits conformational changes from CF(0) to CF(1) or is implicated in proton conduction. The polypeptide is ATP synthase subunit delta (Acaryochloris marina (strain MBIC 11017)).